The primary structure comprises 81 residues: Putative defensin-like protein 102 (81 aa).

Residues 1-24 (MTTTMKTFVAFVLTVFFIMSSAHC) form the signal peptide. Cystine bridges form between Cys43–Cys78, Cys49–Cys71, Cys57–Cys76, and Cys61–Cys77.

The protein belongs to the DEFL family.

It is found in the secreted. This is Putative defensin-like protein 102 from Arabidopsis thaliana (Mouse-ear cress).